The following is a 127-amino-acid chain: Major sperm protein 63 (127 aa).

Ala2 is subject to N-acetylalanine. The MSP domain occupies 9 to 126 (DIQTQPGTKI…RRKNLPIEYN (118 aa)).

In terms of tissue distribution, sperm.

The protein localises to the cell projection. It is found in the pseudopodium. It localises to the cytoplasm. The protein resides in the cytoskeleton. Its function is as follows. Central component in molecular interactions underlying sperm crawling. Forms an extensive filament system that extends from sperm villipoda, along the leading edge of the pseudopod. This is Major sperm protein 63 (msp-63) from Caenorhabditis elegans.